A 154-amino-acid chain; its full sequence is Small ribosomal subunit protein uS9 (154 aa).

Disordered stretches follow at residues 1 to 33 and 115 to 154; these read MVPP…SGLG and PENN…YSKR. Residues 135-154 show a composition bias toward basic residues; the sequence is KERKKAGLKKARKAPQYSKR.

Belongs to the universal ribosomal protein uS9 family.

In Tropheryma whipplei (strain TW08/27) (Whipple's bacillus), this protein is Small ribosomal subunit protein uS9.